The chain runs to 290 residues: Inactive tau-tubulin kinase ttbk-6 (290 aa).

Residues 1–240 form the Protein kinase domain; it reads MEDHVLKKLN…FWQVMENEKI (240 aa). 2 disordered regions span residues 244 to 263 and 268 to 290; these read SKFDWENEEPDMSVPPAAWE and RYFQSNPLEINGPPTPAEVDFVL.

It belongs to the protein kinase superfamily. CK1 Ser/Thr protein kinase family.

This Caenorhabditis elegans protein is Inactive tau-tubulin kinase ttbk-6.